Here is a 243-residue protein sequence, read N- to C-terminus: Small ribosomal subunit protein uS2 (243 aa).

The protein belongs to the universal ribosomal protein uS2 family.

The chain is Small ribosomal subunit protein uS2 from Pseudoalteromonas atlantica (strain T6c / ATCC BAA-1087).